A 291-amino-acid chain; its full sequence is ATP synthase subunit a (291 aa).

6 consecutive transmembrane segments (helical) span residues 51 to 71, 117 to 137, 146 to 166, 173 to 193, 213 to 233, and 239 to 259; these read FSFTNPSLFMLLTLSLVLLLV, FFPCIFVTFTFLLFCNLQGMI, HFLITLGLSFSIFIGITIVGF, FLSFLLPAGVPLPLAPFLVLL, MMAGHSLVKILSGFAWTMLCM, and FIGDLGPLFIVLALTGPELGV.

Belongs to the ATPase A chain family. F-type ATPases have 2 components, CF(1) - the catalytic core - and CF(0) - the membrane proton channel. CF(1) has five subunits: alpha(3), beta(3), gamma(1), delta(1), epsilon(1). CF(0) has three main subunits: a, b and c.

The protein resides in the mitochondrion inner membrane. In terms of biological role, mitochondrial membrane ATP synthase (F(1)F(0) ATP synthase or Complex V) produces ATP from ADP in the presence of a proton gradient across the membrane which is generated by electron transport complexes of the respiratory chain. F-type ATPases consist of two structural domains, F(1) - containing the extramembraneous catalytic core and F(0) - containing the membrane proton channel, linked together by a central stalk and a peripheral stalk. During catalysis, ATP synthesis in the catalytic domain of F(1) is coupled via a rotary mechanism of the central stalk subunits to proton translocation. Key component of the proton channel; it may play a direct role in the translocation of protons across the membrane. The chain is ATP synthase subunit a (ATP6) from Vicia faba (Broad bean).